The sequence spans 488 residues: Ribulose bisphosphate carboxylase large chain (488 aa).

2 residues coordinate substrate: N127 and T177. K179 functions as the Proton acceptor in the catalytic mechanism. A substrate-binding site is contributed by K181. K205, D207, and E208 together coordinate Mg(2+). K205 is modified (N6-carboxylysine). The Proton acceptor role is filled by H297. The substrate site is built by R298, H330, and S382.

The protein belongs to the RuBisCO large chain family. Type I subfamily. As to quaternary structure, heterohexadecamer of 8 large chains and 8 small chains. It depends on Mg(2+) as a cofactor.

The protein localises to the plastid. It is found in the chloroplast. The catalysed reaction is 2 (2R)-3-phosphoglycerate + 2 H(+) = D-ribulose 1,5-bisphosphate + CO2 + H2O. It carries out the reaction D-ribulose 1,5-bisphosphate + O2 = 2-phosphoglycolate + (2R)-3-phosphoglycerate + 2 H(+). Functionally, ruBisCO catalyzes two reactions: the carboxylation of D-ribulose 1,5-bisphosphate, the primary event in carbon dioxide fixation, as well as the oxidative fragmentation of the pentose substrate in the photorespiration process. Both reactions occur simultaneously and in competition at the same active site. The chain is Ribulose bisphosphate carboxylase large chain from Cyanidioschyzon merolae (strain NIES-3377 / 10D) (Unicellular red alga).